A 478-amino-acid polypeptide reads, in one-letter code: Cytochrome c-552 (478 aa).

Residues 1–26 (MTRIKINARRIFSLLIPFFFFTSVHA) form the signal peptide. H94 serves as a coordination point for heme c. Positions 122, 125, and 126 each coordinate heme. Residues C160, C163, H164, C209, C212, and H213 each contribute to the heme c site. 4 residues coordinate Ca(2+): E215, Y216, K261, and Q263. Y216 contacts substrate. H264 provides a ligand contact to substrate. Residues H275, C282, C285, H286, H301, C314, C317, H318, and H393 each coordinate heme c.

This sequence belongs to the cytochrome c-552 family. Requires Ca(2+) as cofactor. The cofactor is heme c.

It localises to the periplasm. It catalyses the reaction 6 Fe(III)-[cytochrome c] + NH4(+) + 2 H2O = 6 Fe(II)-[cytochrome c] + nitrite + 8 H(+). It participates in nitrogen metabolism; nitrate reduction (assimilation). Its function is as follows. Catalyzes the reduction of nitrite to ammonia, consuming six electrons in the process. The sequence is that of Cytochrome c-552 from Escherichia coli O9:H4 (strain HS).